The sequence spans 240 residues: 1-(5-phosphoribosyl)-5-[(5-phosphoribosylamino)methylideneamino] imidazole-4-carboxamide isomerase (240 aa).

Asp-8 serves as the catalytic Proton acceptor. Catalysis depends on Asp-129, which acts as the Proton donor.

It belongs to the HisA/HisF family.

It is found in the cytoplasm. The enzyme catalyses 1-(5-phospho-beta-D-ribosyl)-5-[(5-phospho-beta-D-ribosylamino)methylideneamino]imidazole-4-carboxamide = 5-[(5-phospho-1-deoxy-D-ribulos-1-ylimino)methylamino]-1-(5-phospho-beta-D-ribosyl)imidazole-4-carboxamide. It participates in amino-acid biosynthesis; L-histidine biosynthesis; L-histidine from 5-phospho-alpha-D-ribose 1-diphosphate: step 4/9. This is 1-(5-phosphoribosyl)-5-[(5-phosphoribosylamino)methylideneamino] imidazole-4-carboxamide isomerase from Clostridium beijerinckii (strain ATCC 51743 / NCIMB 8052) (Clostridium acetobutylicum).